The sequence spans 1091 residues: MAGPGSLCCASRGASALLATALLYAALGDVVRSEQQIPLSVVKLWASAFGGEIKSIAAKYSGSQLLQKKYKEYEKDVAIEEIDGLQLVKKLAKIMEEMFHKKSEAVRRLVEAAEEAHLKHEFDADLQYEYFNAVLINERDKDGNFLELGKEFILAPNDHFNNLPVNISLSDVQVPTNMYNKDPAIVNGVYWSESLNKVFVDNFDRDPSLIWQYFGSAKGFFRQYPGIKWEPDENGVIAFDCRNRKWYIQAATSPKDVVILVDVSGSMKGLRLTIAKQTVSSILDTLGDDDFFNIITYNEELHYVEPCLNGTLVQADRTNKEHFREHLDKLFAKGIGMLDIALNEAFNILSDFNHTGQGSICSQAIMLITDGAVDTYDTIFAKYNWPDRKVRIFTYLIGREAAFADNLKWMACANKGFFTQISTLADVQENVMEYLHVLSRPKVIDQEHDVVWTEAYIDSTLPQAQKLADDQGLVLMTTVAMPVFSKQNETRSKGILLGVVGTDVPVKELLKTIPKYKLGIHGYAFAITNNGYILTHPELRPLYEEGKKRRKPNYSSVDLSEVEWEDRDDVLRNAMVNRKTGKFSMEVKKTVDKGKRVLVMTNDYYYTDIKGTPFSLGVALSRGHGKYFFRGNVTIEEGLHDLEHPDVSLADEWSYCNTDLHPEHRHLSQLEAIKLYLKGKEPLLQCDKELIQEVLFDAVVSAPIEAYWTSLALNKSENSDKGVEVAFLGTRTGLSRINLFVGAEQLTNQDFLKAGDKENIFNADHFPLWYRRAAEQIAGSFVYSIPFSTGTVNKSNVVTASTSIQLLDERKSPVVAAVGIQMKLEFFQRKFWTASRQCASLDGKCSISCDDETVNCYLIDNNGFILVSEDYTQTGDFFGEVEGAVMNKLLTMGSFKRITLYDYQAMCRANKESSDSAHGLLDPYKAFLSAAKWIMTELVLFLVEFNLCSWWHSDMTAKAQKLKQTLEPCDTEYPAFVSERTIKETTGNIACEDCSKSFVIQQIPSSNLFMVVVDSSCLCESVAPITMAPIEIRYNESLKCERLKAQKIRRRPESCHGFHPEENARECGGASSLQAQAALLLLPLVSSLFSR.

The first 33 residues, 1–33 (MAGPGSLCCASRGASALLATALLYAALGDVVRS), serve as a signal peptide directing secretion. At 34-1068 (EQQIPLSVVK…HPEENARECG (1035 aa)) the chain is on the extracellular side. The N-linked (GlcNAc...) asparagine glycan is linked to N166. A VWFA domain is found at 256 to 438 (DVVILVDVSG…ENVMEYLHVL (183 aa)). A divalent metal cation is bound by residues D262, S264, and S266. The MIDAS-like motif signature appears at 262 to 266 (DVSGS). The N-linked (GlcNAc...) asparagine glycan is linked to N309. A disulfide bridge links C412 with C1055. The Cache domain occupies 452 to 549 (WTEAYIDSTL…RPLYEEGKKR (98 aa)). Residues N553 and N632 are each glycosylated (N-linked (GlcNAc...) asparagine). A Phosphotyrosine modification is found at Y924. A helical membrane pass occupies residues 1069-1089 (GASSLQAQAALLLLPLVSSLF). Topologically, residues 1090-1091 (SR) are cytoplasmic.

Belongs to the calcium channel subunit alpha-2/delta family. Dimer formed of alpha-2-2 and delta-2 chains; disulfide-linked. Voltage-dependent calcium channels are multisubunit complexes, consisting of alpha-1 (CACNA1), alpha-2 (CACNA2D), beta (CACNB) and delta (CACNA2D) subunits in a 1:1:1:1 ratio. In terms of processing, N-glycosylated. May be proteolytically processed into subunits alpha-2-3 and delta-3 that are disulfide-linked. It is however unclear whether such cleavage really takes place in vivo and has a functional role. As to expression, brain-specific. Predominantly expressed in the caudate putamen, entorhinal complex, hippocampus and cortex.

The protein localises to the membrane. Functionally, the alpha-2/delta subunit of voltage-dependent calcium channels regulates calcium current density and activation/inactivation kinetics of the calcium channel. Acts as a regulatory subunit for P/Q-type calcium channel (CACNA1A), N-type (CACNA1B), L-type (CACNA1C OR CACNA1D) but not T-type (CACNA1G). The sequence is that of Voltage-dependent calcium channel subunit alpha-2/delta-3 (Cacna2d3) from Mus musculus (Mouse).